The chain runs to 535 residues: MYIQRWLYSTNAKDIAILYFIFAIFSGVIGSTMSLIIRLELAAPGNQILHGNHQLFNVLVVGHALLMIFFLVMPGLVGGFGNYMLPLLIGASDMSFARLNNISFWLLPPALVCLVASTLIESWAGTGWTIYPPLSGIQAHSSPSVDLGIFAIHLTSISSLLGAINFIATSYNMRTNGMSYSKMPLFVWAIIITAVMLLLSLPVLTAGVTMLLMDRNFNTSFFEVAGGGDPVLYQHLFWFFGHPEVYILIVPGFGIISHIVSTYSKKPVFGEISMVYAMASIAFLGFLVWSHHMYIVGLDADTRAYFTSSTMVIAVPTGIKIFSWLATLYGGSIRLAVPMLYAIAFLFLFTIGGLTGVALANASLDVAFHDTYYVVGHFHYVLSMGAIFSLFAGYYYWSPQILGLYFNERLAQIQFWLIFVGANVIFMPMHFLGLQGMPRRIPDYPDAYAGWNYVSSIGSVIAIISLALFIYIIYDQLINGLTNKIDNKSVVYSKAPDFVESNTIFANNSIKSASIEFLLNSPPAIHSFNTPAVQS.

The helical transmembrane segment at 17-37 (ILYFIFAIFSGVIGSTMSLII) threads the bilayer. Ca(2+) is bound by residues Glu-40, Ala-43, and Gly-45. A run of 6 helical transmembrane segments spans residues 58–78 (VLVV…GLVG), 104–124 (FWLL…ESWA), 147–167 (LGIF…INFI), 184–204 (PLFV…LPVL), 236–256 (LFWF…FGII), and 268–288 (VFGE…GFLV). Position 63 (His-63) interacts with Fe(II)-heme a. His-242 serves as a coordination point for Cu cation. The 1'-histidyl-3'-tyrosine (His-Tyr) cross-link spans 242-246 (HPEVY). Tyr-246 contributes to the O2 binding site. Residues His-291 and His-292 each contribute to the Cu cation site. 2 helical membrane-spanning segments follow: residues 311-331 (MVIA…LYGG) and 339-359 (MLYA…GVAL). Mg(2+) contacts are provided by His-369 and Asp-370. Transmembrane regions (helical) follow at residues 373-393 (YVVG…LFAG) and 413-433 (IQFW…HFLG). Position 377 (His-377) interacts with heme a3. Residue His-379 coordinates Fe(II)-heme a. Pro-442 contacts Ca(2+). The helical transmembrane segment at 453 to 473 (YVSSIGSVIAIISLALFIYII) threads the bilayer.

This sequence belongs to the heme-copper respiratory oxidase family. As to quaternary structure, component of the cytochrome c oxidase (complex IV, CIV), a multisubunit enzyme composed of a catalytic core of 3 subunits and several supernumerary subunits. The complex exists as a monomer or a dimer and forms supercomplexes (SCs) in the inner mitochondrial membrane with ubiquinol-cytochrome c oxidoreductase (cytochrome b-c1 complex, complex III, CIII). Heme is required as a cofactor. It depends on Cu cation as a cofactor.

The protein localises to the mitochondrion inner membrane. It catalyses the reaction 4 Fe(II)-[cytochrome c] + O2 + 8 H(+)(in) = 4 Fe(III)-[cytochrome c] + 2 H2O + 4 H(+)(out). The protein operates within energy metabolism; oxidative phosphorylation. Functionally, component of the cytochrome c oxidase, the last enzyme in the mitochondrial electron transport chain which drives oxidative phosphorylation. The respiratory chain contains 3 multisubunit complexes succinate dehydrogenase (complex II, CII), ubiquinol-cytochrome c oxidoreductase (cytochrome b-c1 complex, complex III, CIII) and cytochrome c oxidase (complex IV, CIV), that cooperate to transfer electrons derived from NADH and succinate to molecular oxygen, creating an electrochemical gradient over the inner membrane that drives transmembrane transport and the ATP synthase. Cytochrome c oxidase is the component of the respiratory chain that catalyzes the reduction of oxygen to water. Electrons originating from reduced cytochrome c in the intermembrane space (IMS) are transferred via the dinuclear copper A center (CU(A)) of subunit 2 and heme A of subunit 1 to the active site in subunit 1, a binuclear center (BNC) formed by heme A3 and copper B (CU(B)). The BNC reduces molecular oxygen to 2 water molecules using 4 electrons from cytochrome c in the IMS and 4 protons from the mitochondrial matrix. The sequence is that of Cytochrome c oxidase subunit 1 (COX1) from Wickerhamomyces canadensis (Yeast).